The sequence spans 1135 residues: Potassium channel subfamily T member 2 (1135 aa).

The Cytoplasmic segment spans residues 1-63 (MVDLESEVPP…KNQRSSLRIR (63 aa)). The chain crosses the membrane as a helical span at residues 64 to 84 (LFNFSLKLLSCLLYIIRVLLE). The Extracellular segment spans residues 85-101 (NPSQGNEWSHIFWVNRS). Asn99 is a glycosylation site (N-linked (GlcNAc...) asparagine). Residues 102 to 122 (LPLWGLQVSVALISLFETILL) traverse the membrane as a helical segment. Over 123–137 (GYLSYKGNIWEQILR) the chain is Cytoplasmic. Residues 138–158 (IPFILEIINAVPFIISIFWPS) form a helical membrane-spanning segment. Topologically, residues 159–164 (LRNLFV) are extracellular. A helical transmembrane segment spans residues 165-185 (PVFLNCWLAKHALENMINDLH). Topologically, residues 186 to 198 (RAIQRTQSAMFNQ) are cytoplasmic. A helical transmembrane segment spans residues 199–219 (VLILISTLLCLIFTCICGIQH). The Extracellular portion of the chain corresponds to 220–228 (LERIGKKLN). Residues 229–249 (LFDSLYFCIVTFSTVGFGDVT) constitute an intramembrane region (pore-forming). Topologically, residues 250–256 (PETWSSK) are extracellular. A helical transmembrane segment spans residues 257 to 277 (LFVVAMICVALVVLPIQFEQL). The Cytoplasmic portion of the chain corresponds to 278–1135 (AYLWMERQKS…GQDSREETQL (858 aa)). RCK N-terminal domains follow at residues 299 to 435 (EKHV…DHVV) and 718 to 858 (NKLI…CYSL). Disordered regions lie at residues 977–1010 (VEEWEDTKDSKEQGHHRSNHRNSTSSDQSDHPLL), 1017–1036 (WARRLSRKGPKHSGKTAEKI), and 1113–1135 (SEPSRRNSICNVTGQDSREETQL). Residues 1017–1030 (WARRLSRKGPKHSG) are compositionally biased toward basic residues. A compositionally biased stretch (polar residues) spans 1118 to 1127 (RNSICNVTGQ).

The protein belongs to the potassium channel family. Calcium-activated (TC 1.A.1.3) subfamily. KCa4.2/KCNT2 sub-subfamily. Homotetramer. Forms heteromeric channels with KCNT1; these heterodimer channels differ from the homomers in their unitary conductance, kinetic behavior, subcellular localization, and response to activation of protein kinase C. In terms of processing, phosphorylated by protein kinase C. Phosphorylation of the C-terminal domain inhibits channel activity.

The protein resides in the cell membrane. It catalyses the reaction K(+)(in) = K(+)(out). Are normally in a closed state unless activated by an increase in intracellular Na(+) and Cl(-). Inhibited upon stimulation of G-protein coupled receptors, such as CHRM1 and GRM1. There is conflicting data about the effect of ATP on KNCT2 channels activity. Intracellular ATP was initially report to inhibit the channel activity. However, others studies conclude that KNCT2 channels are not inhibited by intracellular ATP. Its function is as follows. Sodium-activated and chloride-activated potassium channel. Produces rapidly activating outward rectifier K(+) currents. Contributes to regulate neuronal excitability. The sequence is that of Potassium channel subfamily T member 2 (KCNT2) from Homo sapiens (Human).